The sequence spans 637 residues: Glutamate--cysteine ligase catalytic subunit (637 aa).

Residue Met-1 is modified to N-acetylmethionine. 2 positions are modified to phosphoserine: Ser-5 and Ser-8.

The protein belongs to the glutamate--cysteine ligase type 3 family. In terms of assembly, heterodimer of a catalytic heavy chain and a regulatory light chain. In terms of tissue distribution, most abundant in kidney. Also found in liver and testis.

The enzyme catalyses L-cysteine + L-glutamate + ATP = gamma-L-glutamyl-L-cysteine + ADP + phosphate + H(+). The catalysed reaction is (2S)-2-aminobutanoate + L-glutamate + ATP = gamma-L-glutamyl-(2S)-2-aminobutanoate + ADP + phosphate + H(+). It functions in the pathway sulfur metabolism; glutathione biosynthesis; glutathione from L-cysteine and L-glutamate: step 1/2. Feedback inhibition by glutathione. Catalyzes the ATP-dependent ligation of L-glutamate and L-cysteine and participates in the first and rate-limiting step in glutathione biosynthesis. The sequence is that of Glutamate--cysteine ligase catalytic subunit from Rattus norvegicus (Rat).